The chain runs to 417 residues: MKFANLTAKEFSDFTDRMTYSHFTQMEGNYELKVAEGTESHLVGIKNNDNEVIAACLLTAVPVMKIFKYFYSNRGPVIDYNNKELVHFFFNELSKYVKKYNCLYLRVDPYLPYQYLNHEGEITGNAGHDWIFDELESLGYKHEGFHKGFDPVLQIRYHSVLNLANKSANDVLKNMDGLRKRNTKKVKKNGVKVRFLSEEELPIFRSFMEDTSETKDFADREDSFYYNRFKHYKGRVLVPLAYINFDEYIEELNNERNVLNKDYNKALKDIEKRPENKKAHNKKENLEQQLDANQQKINEAKNLKQEHGNELPISAGFFIINPFEVVYYAGGTSNRYRHFAGSYAVQWKMINYAIEHGINRYNFYGISGDFSEDAEDAGVVKFKKGYDADVIEYVGDFIKPINKPMYNIYRTLKKLKK.

It belongs to the FemABX family.

The protein localises to the cytoplasm. It carries out the reaction beta-D-GlcNAc-(1-&gt;4)-Mur2Ac(oyl-L-Ala-D-isoglutaminyl-L-Lys-(N(6)-Gly)-D-Ala-D-Ala)-di-trans,octa-cis-undecaprenyl diphosphate + 2 glycyl-tRNA(Gly) = MurNAc-L-Ala-D-isoglutaminyl-L-Lys-(N(6)-tri-Gly)-D-Ala-D-Ala-diphospho-di-trans,octa-cis-undecaprenyl-GlcNAc + 2 tRNA(Gly) + 2 H(+). Its function is as follows. Catalyzes the incorporation of amino acid(s) into the interchain peptide bridge of peptidoglycan, using aminoacyl-tRNA as amino acid donor. In Staphylococcus epidermidis, this protein is Aminoacyltransferase FemA (femA).